A 98-amino-acid chain; its full sequence is Alpha-elicitin hibernalin (98 aa).

3 disulfides stabilise this stretch: C3–C71, C27–C56, and C51–C95.

Its subcellular location is the secreted. Functionally, induces local and distal defense responses (incompatible hypersensitive reaction) in plants from the solanaceae and cruciferae families. Elicits leaf necrosis and causes the accumulation of pathogenesis-related proteins. Might interact with the lipidic molecules of the plasma membrane. The sequence is that of Alpha-elicitin hibernalin from Phytophthora hibernalis.